Reading from the N-terminus, the 126-residue chain is Small ribosomal subunit protein uS13 (126 aa).

The interval 98–126 (PVRGQSTKNNARTRKGRKKTVANKKKATK) is disordered. A compositionally biased stretch (basic residues) spans 108–126 (ARTRKGRKKTVANKKKATK).

The protein belongs to the universal ribosomal protein uS13 family. Part of the 30S ribosomal subunit. Forms a loose heterodimer with protein S19. Forms two bridges to the 50S subunit in the 70S ribosome.

In terms of biological role, located at the top of the head of the 30S subunit, it contacts several helices of the 16S rRNA. In the 70S ribosome it contacts the 23S rRNA (bridge B1a) and protein L5 of the 50S subunit (bridge B1b), connecting the 2 subunits; these bridges are implicated in subunit movement. Contacts the tRNAs in the A and P-sites. The protein is Small ribosomal subunit protein uS13 of Phocaeicola vulgatus (strain ATCC 8482 / DSM 1447 / JCM 5826 / CCUG 4940 / NBRC 14291 / NCTC 11154) (Bacteroides vulgatus).